A 140-amino-acid polypeptide reads, in one-letter code: Nuclear receptor 2C2-associated protein (140 aa).

Belongs to the NR2C2AP family. In terms of assembly, interacts with NR2C2/TR4.

It is found in the nucleus. Functionally, may act as a repressor of NR2C2-mediated transactivation by suppressing the binding between NR2C2/TR4 and the TR4-response element in target genes. This is Nuclear receptor 2C2-associated protein (Nr2c2ap) from Mus musculus (Mouse).